The primary structure comprises 285 residues: Putative cuticle collagen 75 (285 aa).

Triple-helical region regions lie at residues G87 to L116 and G133 to D261. Over residues P207–I231 the composition is skewed to low complexity. The disordered stretch occupies residues P207–G257.

This sequence belongs to the cuticular collagen family. Collagen polypeptide chains are complexed within the cuticle by disulfide bonds and other types of covalent cross-links.

Its function is as follows. Nematode cuticles are composed largely of collagen-like proteins. The cuticle functions both as an exoskeleton and as a barrier to protect the worm from its environment. This is Putative cuticle collagen 75 (col-75) from Caenorhabditis elegans.